The sequence spans 391 residues: Homocysteine-responsive endoplasmic reticulum-resident ubiquitin-like domain member 1 protein (391 aa).

Residue Met-1 is modified to N-acetylmethionine. At 1–263 (MEPEPQPEPV…VEEDDEINRD (263 aa)) the chain is on the cytoplasmic side. Residues 10–72 (VTLLVKSPNQ…LLDHQCLQDL (63 aa)) enclose the Ubiquitin-like domain. The tract at residues 90–126 (NPSKMPETSTKGAESTEQPDNSNQTQHPGDSSSDGLR) is disordered. The segment covering 95-124 (PETSTKGAESTEQPDNSNQTQHPGDSSSDG) has biased composition (polar residues). Residues 115-200 (QHPGDSSSDG…ASGTFVPTPS (86 aa)) are interaction with UBQLN1. Ser-135 is subject to Phosphoserine. A helical transmembrane segment spans residues 264–284 (WLDWTYSAATFSVFLSILYFY). Residues 285-289 (SSLSR) are Lumenal-facing. A helical membrane pass occupies residues 290 to 310 (FLMVMGATVVMYLHHVGWFPF). The Cytoplasmic segment spans residues 311–391 (RQRPVQNFPD…LPEGPPALAN (81 aa)). Positions 317–361 (NFPDDGGPRDAANQDPNNNLQGGMDPEMEDPNRLPPDREVLDPEH) are disordered. Over residues 346 to 361 (DPNRLPPDREVLDPEH) the composition is skewed to basic and acidic residues.

As to quaternary structure, interacts with PSEN1 and PSEN2. Interacts with UBXN6. Interacts with UBQLN1, UBQLN2 and UBQLN4. Component of the HRD1 complex, which comprises at least SYNV1/HRD1, FAM8A1, HERPUD1/HERP, OS9, SEL1L and UBE2J1. FAM8A1 binding to SYNV1 may promote recruitment of HERPUD1 to the HRD1 complex.

Its subcellular location is the endoplasmic reticulum membrane. Functionally, component of the endoplasmic reticulum quality control (ERQC) system also called ER-associated degradation (ERAD) involved in ubiquitin-dependent degradation of misfolded endoplasmic reticulum proteins. Binds to ubiquilins and this interaction is required for efficient degradation of CD3D via the ERAD pathway. The chain is Homocysteine-responsive endoplasmic reticulum-resident ubiquitin-like domain member 1 protein (Herpud1) from Mus musculus (Mouse).